Reading from the N-terminus, the 278-residue chain is Large ribosomal subunit protein uL2 (278 aa).

The segment at 218–278 (RPHNRGVVMN…IMRSRHQRKK (61 aa)) is disordered.

The protein belongs to the universal ribosomal protein uL2 family. As to quaternary structure, part of the 50S ribosomal subunit. Forms a bridge to the 30S subunit in the 70S ribosome.

In terms of biological role, one of the primary rRNA binding proteins. Required for association of the 30S and 50S subunits to form the 70S ribosome, for tRNA binding and peptide bond formation. It has been suggested to have peptidyltransferase activity; this is somewhat controversial. Makes several contacts with the 16S rRNA in the 70S ribosome. The protein is Large ribosomal subunit protein uL2 of Rhizobium etli (strain ATCC 51251 / DSM 11541 / JCM 21823 / NBRC 15573 / CFN 42).